The chain runs to 164 residues: Kunitz-type serine protease inhibitor BbKI (164 aa).

This sequence belongs to the protease inhibitor I3 (leguminous Kunitz-type inhibitor) family. In terms of assembly, monomer.

Its subcellular location is the secreted. In terms of biological role, inhibits bovine trypsin, human plasma kallikrein and plasmin and weakly bovine chymotrypsin. This Bauhinia bauhinioides (Perlebia bauhinoides) protein is Kunitz-type serine protease inhibitor BbKI.